The sequence spans 128 residues: Gastrotropin (128 aa).

N-acetylalanine is present on Ala-2.

Belongs to the calycin superfamily. Fatty-acid binding protein (FABP) family. Predominantly expressed in ileum; also expressed in ovary.

It localises to the cytoplasm. Its subcellular location is the membrane. Binds to bile acids and is involved in enterohepatic bile acid metabolism. Required for efficient apical to basolateral transport of conjugated bile acids in ileal enterocytes. Stimulates gastric acid and pepsinogen secretion. The chain is Gastrotropin (Fabp6) from Rattus norvegicus (Rat).